A 297-amino-acid polypeptide reads, in one-letter code: HTH-type transcriptional regulator ArgP (297 aa).

Residues 4–60 enclose the HTH lysR-type domain; it reads PDYRTLQALDAVIRERGFERAAQKLCITQSAVSQRIKQLENMFGQPLLVRTVPPRPT. Positions 21-40 form a DNA-binding region, H-T-H motif; it reads FERAAQKLCITQSAVSQRIK.

This sequence belongs to the LysR transcriptional regulatory family. In terms of assembly, homodimer.

Controls the transcription of genes involved in arginine and lysine metabolism. This chain is HTH-type transcriptional regulator ArgP, found in Klebsiella pneumoniae subsp. pneumoniae (strain ATCC 700721 / MGH 78578).